The primary structure comprises 285 residues: Heterogeneous nuclear ribonucleoprotein A/B (285 aa).

The segment at 1 to 65 is disordered; sequence MSDAAEEQPM…NQNGAEGDQI (65 aa). The span at 25–43 shows a compositional bias: low complexity; it reads EGEAPVEPSAAAAAPAASA. RRM domains lie at 75–158 and 159–238; these read GKMF…KDPV and KKIF…QPKE. At Ser87 the chain carries Phosphoserine. Residues Lys136 and Lys208 each participate in a glycyl lysine isopeptide (Lys-Gly) (interchain with G-Cter in SUMO2) cross-link. Lys220 is subject to N6-acetyllysine. Residues 239-285 are disordered; it reads VYQQQQYGSGGRGNRNRGNRGSGGGQGSTNYGKSQRRGGHQNNYKPY. Ser247 is subject to Phosphoserine. Arg250 is subject to Dimethylated arginine; alternate. Residue Arg250 is modified to Omega-N-methylarginine; alternate. Omega-N-methylarginine occurs at positions 255 and 258. Lys271 carries the N6-acetyllysine modification. Dimethylated arginine; alternate is present on Arg275. Omega-N-methylarginine; alternate is present on Arg275. Asymmetric dimethylarginine; alternate is present on Arg275.

In terms of assembly, identified in a IGF2BP1-dependent mRNP granule complex containing untranslated mRNAs. Interacts with APOBEC1. In terms of tissue distribution, ubiquitous.

The protein resides in the nucleus. Its subcellular location is the cytoplasm. Transcriptional repressor. Binds to CArG box motifs, single-stranded and double-stranded DNA, and RNA. It may be that repression by CBF-A is a result of competitive binding of CBF, a putative positive factor, and CBF-A to the same or overlapping motifs around the CArG boxes. In Mus musculus (Mouse), this protein is Heterogeneous nuclear ribonucleoprotein A/B (Hnrnpab).